Consider the following 538-residue polypeptide: MQETGVRNGAFGADKFGLKNLKQVHWNLGAPQLYQYSLSAGEAVLSADGALCADTGEFTGRSPKDKFTVRDATTDKKMWWAGNQSITAEQFETLYQDFLKHAEGKSLFAQDLYGGADPAYRIKTRVFTELAWHSLFIRTLLIRPEAIELSTFTPELTIIDMPSFRADPKRHGCKSENVVAIDFARKIVLIGGSYYAGEMKKSVFTTLNYYLPERGVMPMHCSANVGAKDDAAIFFGLSGTGKTTLSADPNRTLIGDDEHGWGPNGVFNFEGGCYAKCIKLSQEAEPQIYAASTRFGAVLENCVLDEDTRVVDFDDGSKTENTRSAYPLDFIPNASRTGRAPQPKNVVMLAADAFGVLPPIAKLSPAQAMYHFLSGYTAKVAGTERGLGNEPQPEFSTCFGSPFLPLDPSVYGNMLRDLIAQHNVDCWLVNTGWTGGKYGTGSRMPIKVTRALLTAALDGSLRNVEFRTDKYFGFAVPTALPGVPSEILNPVNTWKDKDEFDKTARALVGMFQKNFAKFEAQVDAEVRAAAPDVKLAAE.

Substrate contacts are provided by Arg61, Tyr195, and Lys201. ATP-binding positions include Lys201, His220, and Gly236–Thr244. Residues Lys201 and His220 each coordinate Mn(2+). Mn(2+) is bound at residue Asp257. 3 residues coordinate ATP: Glu285, Arg323, and Thr449. Arg323 contacts substrate.

The protein belongs to the phosphoenolpyruvate carboxykinase (ATP) family. It depends on Mn(2+) as a cofactor.

The protein resides in the cytoplasm. It catalyses the reaction oxaloacetate + ATP = phosphoenolpyruvate + ADP + CO2. It participates in carbohydrate biosynthesis; gluconeogenesis. Functionally, involved in the gluconeogenesis. Catalyzes the conversion of oxaloacetate (OAA) to phosphoenolpyruvate (PEP) through direct phosphoryl transfer between the nucleoside triphosphate and OAA. The polypeptide is Phosphoenolpyruvate carboxykinase (ATP) (Bradyrhizobium diazoefficiens (strain JCM 10833 / BCRC 13528 / IAM 13628 / NBRC 14792 / USDA 110)).